The sequence spans 581 residues: Arginine--tRNA ligase (581 aa).

The 'HIGH' region motif lies at P126–H136.

This sequence belongs to the class-I aminoacyl-tRNA synthetase family. As to quaternary structure, monomer.

Its subcellular location is the cytoplasm. It catalyses the reaction tRNA(Arg) + L-arginine + ATP = L-arginyl-tRNA(Arg) + AMP + diphosphate. This is Arginine--tRNA ligase from Shewanella oneidensis (strain ATCC 700550 / JCM 31522 / CIP 106686 / LMG 19005 / NCIMB 14063 / MR-1).